Reading from the N-terminus, the 400-residue chain is Proline-rich protein 5 (400 aa).

The interval 301–358 (TDSTSKLSMAGTKPPGEGERPPISNGQFPPLHNLSDSQQGLYNSQRDSPLLPAPSSSP) is disordered. Residues 334–347 (LSDSQQGLYNSQRD) are compositionally biased toward polar residues. The span at 348 to 358 (SPLLPAPSSSP) shows a compositional bias: low complexity.

This sequence belongs to the PROTOR family. In terms of assembly, associated component of the mechanistic target of rapamycin complex 2 (mTORC2).

Its function is as follows. Associated subunit of mTORC2, which regulates cell growth and survival in response to hormonal signals. In Xenopus laevis (African clawed frog), this protein is Proline-rich protein 5 (prr5).